Here is a 476-residue protein sequence, read N- to C-terminus: ATP synthase subunit beta (476 aa).

154-161 (GGAGVGKT) lines the ATP pocket.

This sequence belongs to the ATPase alpha/beta chains family. In terms of assembly, F-type ATPases have 2 components, CF(1) - the catalytic core - and CF(0) - the membrane proton channel. CF(1) has five subunits: alpha(3), beta(3), gamma(1), delta(1), epsilon(1). CF(0) has four main subunits: a(1), b(1), b'(1) and c(9-12).

It localises to the cell inner membrane. It catalyses the reaction ATP + H2O + 4 H(+)(in) = ADP + phosphate + 5 H(+)(out). Its function is as follows. Produces ATP from ADP in the presence of a proton gradient across the membrane. The catalytic sites are hosted primarily by the beta subunits. The chain is ATP synthase subunit beta from Rhodopseudomonas palustris (strain BisA53).